The sequence spans 180 residues: Oligoribonuclease (180 aa).

The Exonuclease domain maps to 7 to 170; that stretch reads LIWIDLEMTG…DDIRESIAEL (164 aa). Y128 is an active-site residue.

It belongs to the oligoribonuclease family.

The protein localises to the cytoplasm. Functionally, 3'-to-5' exoribonuclease specific for small oligoribonucleotides. The sequence is that of Oligoribonuclease from Pseudomonas fluorescens (strain ATCC BAA-477 / NRRL B-23932 / Pf-5).